Here is a 511-residue protein sequence, read N- to C-terminus: D-alanine--D-alanyl carrier protein ligase (511 aa).

Residue 152–153 (TS) participates in ATP binding. Asp-199 provides a ligand contact to D-alanine. 294–299 (NAYGPT) contributes to the ATP binding site. Position 303 (Val-303) interacts with D-alanine. Residues Asp-385, 397–400 (YGGR), and Lys-499 each bind ATP. Lys-499 lines the D-alanine pocket.

The protein belongs to the ATP-dependent AMP-binding enzyme family. DltA subfamily.

The protein localises to the cytoplasm. It catalyses the reaction holo-[D-alanyl-carrier protein] + D-alanine + ATP = D-alanyl-[D-alanyl-carrier protein] + AMP + diphosphate. Its pathway is cell wall biogenesis; lipoteichoic acid biosynthesis. In terms of biological role, catalyzes the first step in the D-alanylation of lipoteichoic acid (LTA), the activation of D-alanine and its transfer onto the D-alanyl carrier protein (Dcp) DltC. In an ATP-dependent two-step reaction, forms a high energy D-alanyl-AMP intermediate, followed by transfer of the D-alanyl residue as a thiol ester to the phosphopantheinyl prosthetic group of the Dcp. D-alanylation of LTA plays an important role in modulating the properties of the cell wall in Gram-positive bacteria, influencing the net charge of the cell wall. The chain is D-alanine--D-alanyl carrier protein ligase from Streptococcus agalactiae serotype III (strain NEM316).